Here is a 176-residue protein sequence, read N- to C-terminus: MDLPGPIHEILVLFGGFVLLLGGLGVVLLTNPIYSAFSLGLVLVCISLFYFLLNSYFVAVAQLLIYVGAINVLIIFAVMFVNGSEWSKDKNYWTIGDGFTLLLCITIPFSLMTTIPDTSWYGILWTTRSNQIVEQGLINNVQQIGIHLATDFYLPFELISLILLVSLIGAITMARQ.

Helical transmembrane passes span isoleucine 10 to threonine 30, isoleucine 33 to leucine 53, valine 60 to phenylalanine 80, isoleucine 95 to isoleucine 115, and phenylalanine 152 to threonine 172.

The protein belongs to the complex I subunit 6 family. As to quaternary structure, NDH is composed of at least 16 different subunits, 5 of which are encoded in the nucleus.

It localises to the plastid. The protein resides in the chloroplast thylakoid membrane. The enzyme catalyses a plastoquinone + NADH + (n+1) H(+)(in) = a plastoquinol + NAD(+) + n H(+)(out). It carries out the reaction a plastoquinone + NADPH + (n+1) H(+)(in) = a plastoquinol + NADP(+) + n H(+)(out). In terms of biological role, NDH shuttles electrons from NAD(P)H:plastoquinone, via FMN and iron-sulfur (Fe-S) centers, to quinones in the photosynthetic chain and possibly in a chloroplast respiratory chain. The immediate electron acceptor for the enzyme in this species is believed to be plastoquinone. Couples the redox reaction to proton translocation, and thus conserves the redox energy in a proton gradient. The sequence is that of NAD(P)H-quinone oxidoreductase subunit 6, chloroplastic (ndhG) from Saccharum hybrid (Sugarcane).